The primary structure comprises 194 residues: Thymidine kinase (194 aa).

Residues 15–22 (GSMFSGKS) and 88–91 (DEVQ) contribute to the ATP site. The active-site Proton acceptor is the Glu-89. Cys-145, Cys-148, Cys-183, and His-186 together coordinate Zn(2+).

It belongs to the thymidine kinase family. Homotetramer.

The protein resides in the cytoplasm. It catalyses the reaction thymidine + ATP = dTMP + ADP + H(+). This chain is Thymidine kinase, found in Bacillus licheniformis (strain ATCC 14580 / DSM 13 / JCM 2505 / CCUG 7422 / NBRC 12200 / NCIMB 9375 / NCTC 10341 / NRRL NRS-1264 / Gibson 46).